A 150-amino-acid polypeptide reads, in one-letter code: Arginine repressor (150 aa).

It belongs to the ArgR family.

It localises to the cytoplasm. Its pathway is amino-acid biosynthesis; L-arginine biosynthesis [regulation]. Regulates arginine biosynthesis genes. In Finegoldia magna (strain ATCC 29328 / DSM 20472 / WAL 2508) (Peptostreptococcus magnus), this protein is Arginine repressor.